Consider the following 422-residue polypeptide: Calpain-2 catalytic subunit (422 aa).

Residues 1–66 (QKLIRIRNPW…YSRLEICNLT (66 aa)) form the Calpain catalytic domain. Asparagine 8 is a catalytic residue. Ca(2+) is bound by residues glutamate 14, aspartate 21, and glutamate 45. The segment at 67–236 (PDTLTSDTYK…KKADYQAVDD (170 aa)) is domain III. Positions 237–251 (EIEADLEEADVSEDD) are linker. Positions 252–422 (IDDGFRRLFA…LISWLCFSVL (171 aa)) are domain IV. Residues alanine 264, aspartate 267, glutamate 269, glutamate 274, aspartate 307, aspartate 309, threonine 311, lysine 313, glutamate 318, aspartate 337, aspartate 339, serine 341, threonine 343, glutamate 348, aspartate 380, and asparagine 383 each contribute to the Ca(2+) site. 2 consecutive EF-hand domains span residues 294–327 (LSIE…TKIQ) and 324–359 (TKIQ…AGFK). The region spanning 389 to 422 (VRLETLFKIFKQLDPDNTGMIQLDLISWLCFSVL) is the EF-hand 3 domain.

The protein belongs to the peptidase C2 family. In terms of assembly, forms a heterodimer with a small (regulatory) subunit (CAPNS1). Interacts with CPEB3; this leads to cleavage of CPEB3. Ca(2+) is required as a cofactor. As to expression, ubiquitous.

It localises to the cytoplasm. The protein resides in the cell membrane. The catalysed reaction is Broad endopeptidase specificity.. Its activity is regulated as follows. Activated by 200-1000 micromolar concentrations of calcium and inhibited by calpastatin. Functionally, calcium-regulated non-lysosomal thiol-protease which catalyzes limited proteolysis of substrates involved in cytoskeletal remodeling and signal transduction. Proteolytically cleaves MYOC at 'Arg-226'. Proteolytically cleaves CPEB3 following neuronal stimulation which abolishes CPEB3 translational repressor activity, leading to translation of CPEB3 target mRNAs. The polypeptide is Calpain-2 catalytic subunit (CAPN2) (Oryctolagus cuniculus (Rabbit)).